Consider the following 88-residue polypeptide: MKTLLLTLVVVTIVCLDLGNTANTLFCDNSNVPSIRTRKRCLKNQKLCYKMTFFTPGFGWTQIKGCIHRCPESTPNEKYQCCSTDNCI.

Positions 1–21 are cleaved as a signal peptide; sequence MKTLLLTLVVVTIVCLDLGNT. Intrachain disulfides connect Cys27/Cys48, Cys41/Cys66, Cys70/Cys81, and Cys82/Cys87.

Belongs to the three-finger toxin family. Ancestral subfamily. Orphan group II sub-subfamily. As to expression, expressed by the venom gland.

It is found in the secreted. In terms of biological role, binds with low affinity to muscular (alpha-1-beta-1-delta-epsilon/CHRNA1-CHRNB1-CHRND-CHRNE) and very low affinity to neuronal (alpha-7/CHRNA7) nicotinic acetylcholine receptor (nAChR). In Micrurus corallinus (Brazilian coral snake), this protein is Three-finger toxin 3FTx-2.